Here is a 532-residue protein sequence, read N- to C-terminus: ATP-dependent RNA helicase DBP3 (532 aa).

The segment at 1–78 (MGKRDRTEDD…EVAEEKPKMT (78 aa)) is disordered. The segment covering 15–58 (KKVKLDKKDKKEKKEKKDKKDKKDKKDKKDKKDKKEKKEKKEKK) has biased composition (basic residues). The short motif at 126–152 (MEFSHVTLDPRITKVLTKFPRPTPIQA) is the Q motif element. One can recognise a Helicase ATP-binding domain in the interval 155–327 (WPYLLAGKDM…EGFMKTPTKV (173 aa)). ATP is bound at residue 168 to 175 (AETGSGKT). The DEAD box motif lies at 274–277 (DEAD). Residues 356–502 (RLLDLLRQYA…PVPDELLKFG (147 aa)) enclose the Helicase C-terminal domain.

The protein belongs to the DEAD box helicase family. DDX5/DBP2 subfamily.

It is found in the nucleus. It localises to the nucleolus. It carries out the reaction ATP + H2O = ADP + phosphate + H(+). ATP-dependent RNA helicase required for 60S ribosomal subunit synthesis. Involved in efficient pre-rRNA processing, predominantly at site A3, which is necessary for the normal formation of 25S and 5.8S rRNAs. This Yarrowia lipolytica (strain CLIB 122 / E 150) (Yeast) protein is ATP-dependent RNA helicase DBP3 (DBP3).